A 1595-amino-acid chain; its full sequence is A disintegrin and metalloproteinase with thrombospondin motifs 7 (1595 aa).

Residues M1 to G20 form the signal peptide. Residues P21–R217 constitute a propeptide that is removed on maturation. N-linked (GlcNAc...) asparagine glycosylation is found at N84 and N105. The tract at residues P165–S218 is disordered. Positions G189–S196 match the Cysteine switch motif. C191 contributes to the Zn(2+) binding site. Residues E198 to Q210 show a composition bias toward basic and acidic residues. The Peptidase M12B domain occupies K223–P434. Intrachain disulfides connect C299–C353, C328–C335, C347–C429, C386–C413, C456–C479, C467–C485, C474–C504, C498–C509, C532–C569, C536–C574, and C547–C559. H369 provides a ligand contact to Zn(2+). The active site involves E370. Residues H373 and H379 each coordinate Zn(2+). The Disintegrin domain maps to V444–V519. Residues D520 to P575 enclose the TSP type-1 1 domain. N619 carries N-linked (GlcNAc...) asparagine glycosylation. The segment at H680–Q791 is spacer. TSP type-1 domains are found at residues P801–P860, A861–Y917, and C922–Q975. Disordered stretches follow at residues G989 to P1035, P1077 to P1121, R1179 to D1234, and K1255 to D1315. Pro residues-rich tracts occupy residues Q1005–S1015 and H1079–S1089. Positions S1220–S1232 are enriched in low complexity. Over residues Q1268–P1280 the composition is skewed to polar residues. 4 consecutive TSP type-1 domains span residues K1320 to H1368, P1371 to L1431, W1433 to T1476, and P1478 to E1538. A PLAC domain is found at E1541–S1581.

As to quaternary structure, interacts with COMP. The cofactor is Zn(2+). Post-translationally, glycosylated. Can be O-fucosylated by POFUT2 on a serine or a threonine residue found within the consensus sequence C1-X(2)-(S/T)-C2-G of the TSP type-1 repeat domains where C1 and C2 are the first and second cysteine residue of the repeat, respectively. Fucosylated repeats can then be further glycosylated by the addition of a beta-1,3-glucose residue by the glucosyltransferase, B3GALTL. Fucosylation mediates the efficient secretion of ADAMTS family members. Can also be C-glycosylated with one or two mannose molecules on tryptophan residues within the consensus sequence W-X-X-W of the TPRs. N- and C-glycosylations can also facilitate secretion. In terms of processing, O-glycosylated proteoglycan; contains chondroitin sulfate. May be cleaved by a furin endopeptidase. The precursor is sequentially processed. In terms of tissue distribution, detected in liver, ovary, kidney, testicle, lung and embryo.

It is found in the secreted. Its subcellular location is the extracellular space. The protein resides in the extracellular matrix. Its function is as follows. Metalloprotease. Was previously shown to degrade COMP. However, a later study found no activity against COMP. The protein is A disintegrin and metalloproteinase with thrombospondin motifs 7 (Adamts7) of Rattus norvegicus (Rat).